We begin with the raw amino-acid sequence, 203 residues long: Ras-related protein Rab-18 (203 aa).

The GTP site is built by Ser20, Gly23, Lys24, Ser25, Ser26, Asp37, Pro38, Thr43, Gly69, Lys126, Asp128, and Ala155. The Effector region signature appears at 40–48 (QAATIGVDF). Residues Cys201 and Cys203 are each lipidated (S-geranylgeranyl cysteine). Cys203 is subject to Cysteine methyl ester.

The protein belongs to the small GTPase superfamily. Rab family.

It catalyses the reaction GTP + H2O = GDP + phosphate + H(+). Functionally, the small GTPases Rab are key regulators of intracellular membrane trafficking, from the formation of transport vesicles to their fusion with membranes. Rabs cycle between an inactive GDP-bound form and an active GTP-bound form that is able to recruit to membranes different sets of downstream effectors directly responsible for vesicle formation, movement, tethering and fusion. Plays a role in apical endocytosis/recycling. May be implicated in transport between the plasma membrane and early endosomes. Plays a role in the shedding of pathogen spores from intestinal cells. This is Ras-related protein Rab-18 (rab-18) from Caenorhabditis elegans.